The primary structure comprises 463 residues: Succinate--CoA ligase [ADP-forming] subunit beta, mitochondrial (463 aa).

The N-terminal 52 residues, 1 to 52 (MAASMFYGRLVAVATLRNHRPRTAQRAAAQVLGSSGLFNNHGLQVQQQQQRN), are a transit peptide targeting the mitochondrion. Residues 61-288 (MELLQEAGVS…SNSAYRQKKI (228 aa)) form the ATP-grasp domain. Lys78 is modified (N6-acetyllysine). Position 84 is a phosphotyrosine (Tyr84). Lys88 carries the post-translational modification N6-acetyllysine; alternate. N6-succinyllysine; alternate is present on Lys88. ATP contacts are provided by residues Lys98 and 105 to 107 (GRG). An N6-acetyllysine mark is found at Lys129, Lys139, Lys143, and Lys216. Mg(2+) is bound by residues Asn258 and Asp272. A Phosphoserine modification is found at Ser279. Asn323 is a binding site for substrate. Thr341 is subject to Phosphothreonine. Lys368 carries the post-translational modification N6-acetyllysine. 380-382 (GIM) provides a ligand contact to substrate.

Belongs to the succinate/malate CoA ligase beta subunit family. ATP-specific subunit beta subfamily. As to quaternary structure, heterodimer of an alpha and a beta subunit. The beta subunit determines specificity for ATP. Interacts with ALAS2. Requires Mg(2+) as cofactor. In terms of tissue distribution, widely expressed. Not expressed in liver and lung.

It is found in the mitochondrion. It carries out the reaction succinate + ATP + CoA = succinyl-CoA + ADP + phosphate. The protein operates within carbohydrate metabolism; tricarboxylic acid cycle; succinate from succinyl-CoA (ligase route): step 1/1. Its activity is regulated as follows. Inhibited by itaconate. Its function is as follows. ATP-specific succinyl-CoA synthetase functions in the citric acid cycle (TCA), coupling the hydrolysis of succinyl-CoA to the synthesis of ATP and thus represents the only step of substrate-level phosphorylation in the TCA. The beta subunit provides nucleotide specificity of the enzyme and binds the substrate succinate, while the binding sites for coenzyme A and phosphate are found in the alpha subunit. This chain is Succinate--CoA ligase [ADP-forming] subunit beta, mitochondrial, found in Homo sapiens (Human).